A 1257-amino-acid polypeptide reads, in one-letter code: ATP-binding cassette sub-family B member 5 (1257 aa).

The disordered stretch occupies residues 1 to 24 (MENSERAEEMQENYQRNGTAEEQP). Asn-17 carries an N-linked (GlcNAc...) asparagine glycan. The helical transmembrane segment at 49-69 (ILGILASLVNGACLPLMPLVL) threads the bilayer. Residues 49 to 350 (ILGILASLVN…AAVPHFETFA (302 aa)) form the ABC transmembrane type-1 1 domain. N-linked (GlcNAc...) asparagine glycosylation is found at Asn-85 and Asn-91. A run of 5 helical transmembrane segments spans residues 110 to 130 (YVGI…LWII), 181 to 201 (KIAL…VGLV), 203 to 223 (GWKL…SAAA), 294 to 314 (VYFF…SLIL), and 322 to 342 (IGTV…IGAA). N-linked (GlcNAc...) asparagine glycans are attached at residues Asn-371, Asn-390, and Asn-423. One can recognise an ABC transporter 1 domain in the interval 386–622 (VEFKNVSFNY…RGLYYSLVMS (237 aa)). 421 to 428 (GLNGSGKS) is an ATP binding site. Helical transmembrane passes span 693–713 (VLGT…SIIF) and 737–757 (MIFV…GLFY). Positions 693–980 (VLGTLASVLN…TLVLAPEYSK (288 aa)) constitute an ABC transmembrane type-1 2 domain. N-linked (GlcNAc...) asparagine glycans are attached at residues Asn-789 and Asn-819. The chain crosses the membrane as a helical span at residues 827–847 (VIISFIYGWEMTFLILSIAPV). Asn-910 carries N-linked (GlcNAc...) asparagine glycosylation. Transmembrane regions (helical) follow at residues 917-937 (IIGS…AAGF) and 954-974 (MFIV…TLVL). Residues 1015–1253 (LEFREVSFFY…RDIYFKLVNA (239 aa)) form the ABC transporter 2 domain. ATP is bound at residue 1050–1057 (GSSGCGKS). Residues Asn-1104 and Asn-1188 are each glycosylated (N-linked (GlcNAc...) asparagine).

The protein belongs to the ABC transporter superfamily. ABCB family. Multidrug resistance exporter (TC 3.A.1.201) subfamily. In terms of tissue distribution, expressed by CD133-expressing progenitor cells among epidermal melanocytes (at protein level). Widely expressed with specific expression in pigment cells. Highly expressed in several malignant tissues: highly expressed in clinical melanomas, with low expression in normal skin. In melanoma, marks malignant melanoma-initiating cells (MMIC), in which clinical virulence resides as a consequence of unlimited self-renewal capacity, resulting in inexorable tumor progression and metastasis. Also highly expressed in a number of leukemia cells. Expressed in basal limbal epithelium.

The protein resides in the cell membrane. The catalysed reaction is daunorubicin(in) + ATP + H2O = daunorubicin(out) + ADP + phosphate + H(+). Its function is as follows. Energy-dependent efflux transporter responsible for decreased drug accumulation in multidrug-resistant cells. Specifically present in limbal stem cells, where it plays a key role in corneal development and repair. The protein is ATP-binding cassette sub-family B member 5 of Homo sapiens (Human).